Consider the following 94-residue polypeptide: Scorpine-like-1 (94 aa).

Positions 1–18 are cleaved as a signal peptide; sequence MNTKFTVLIFLGVIVVSY. The BetaSPN-type CS-alpha/beta domain maps to 54–94; that stretch reads EYGCMMDISWNKDCQRHCQSTEQKDGICHGMKCKCGKPRSY. 3 cysteine pairs are disulfide-bonded: Cys-57/Cys-81, Cys-67/Cys-86, and Cys-71/Cys-88.

Belongs to the long chain scorpion toxin family. Class 3 subfamily. In terms of tissue distribution, expressed by the venom gland.

It localises to the secreted. In terms of biological role, has antibacterial activity. The chain is Scorpine-like-1 from Urodacus yaschenkoi (Inland robust scorpion).